Consider the following 346-residue polypeptide: Beta-hexosaminidase (346 aa).

Substrate-binding positions include aspartate 62, arginine 70, arginine 134, and 164–165 (KH). Catalysis depends on histidine 177, which acts as the Proton donor/acceptor. Aspartate 249 acts as the Nucleophile in catalysis.

Belongs to the glycosyl hydrolase 3 family. NagZ subfamily.

The protein resides in the cytoplasm. The catalysed reaction is Hydrolysis of terminal non-reducing N-acetyl-D-hexosamine residues in N-acetyl-beta-D-hexosaminides.. It functions in the pathway cell wall biogenesis; peptidoglycan recycling. In terms of biological role, plays a role in peptidoglycan recycling by cleaving the terminal beta-1,4-linked N-acetylglucosamine (GlcNAc) from peptide-linked peptidoglycan fragments, giving rise to free GlcNAc, anhydro-N-acetylmuramic acid and anhydro-N-acetylmuramic acid-linked peptides. The sequence is that of Beta-hexosaminidase from Actinobacillus succinogenes (strain ATCC 55618 / DSM 22257 / CCUG 43843 / 130Z).